The chain runs to 324 residues: Acetyl-coenzyme A carboxylase carboxyl transferase subunit alpha (324 aa).

Positions 37 to 291 (KLERRLDKLK…RDFILREWLR (255 aa)) constitute a CoA carboxyltransferase C-terminal domain.

Belongs to the AccA family. In terms of assembly, acetyl-CoA carboxylase is a heterohexamer composed of biotin carboxyl carrier protein (AccB), biotin carboxylase (AccC) and two subunits each of ACCase subunit alpha (AccA) and ACCase subunit beta (AccD).

The protein localises to the cytoplasm. It catalyses the reaction N(6)-carboxybiotinyl-L-lysyl-[protein] + acetyl-CoA = N(6)-biotinyl-L-lysyl-[protein] + malonyl-CoA. Its pathway is lipid metabolism; malonyl-CoA biosynthesis; malonyl-CoA from acetyl-CoA: step 1/1. In terms of biological role, component of the acetyl coenzyme A carboxylase (ACC) complex. First, biotin carboxylase catalyzes the carboxylation of biotin on its carrier protein (BCCP) and then the CO(2) group is transferred by the carboxyltransferase to acetyl-CoA to form malonyl-CoA. The sequence is that of Acetyl-coenzyme A carboxylase carboxyl transferase subunit alpha from Chlamydia abortus (strain DSM 27085 / S26/3) (Chlamydophila abortus).